The primary structure comprises 598 residues: Transcription factor dpl-1 (598 aa).

3 disordered regions span residues 1–73 (MNPT…PTGL), 435–457 (NRPY…VNSG), and 573–598 (TEQP…DYFQ). Over residues 13–22 (PAQSRPQVSL) the composition is skewed to polar residues. The span at 55-64 (GVGGSSGAGG) shows a compositional bias: gly residues.

It belongs to the E2F/DP family. As to quaternary structure, component of the DRM complex, at least composed of lin-9, lin-35, lin-37, lin-52, lin-53, lin-54- dpl-1 and efl-1. Interacts (via N-terminus) with efl-1. Interacts (via C-terminus) with lin-35 (via C-terminus).

Its subcellular location is the nucleus. Synthetic multivulva class B (synMuvB) protein. SynMuvB proteins are required to repress the induction of vulval development by Ras signaling and probably act by forming the multiprotein DRM complex that represses transcription. May also negatively regulate vulval development in association with other SynMuv class B proteins such as lin-15A. Can stimulate E2F-dependent transcription. Plays a role in negatively regulating the progression through the G1 phase of the cell cycle during postembryonic development, most likely by acting as a transcriptional repressor in association with the cell cycle regulatory factor efl-1 and the transcriptional repressor lin-35, but may also act as a positive regulator of cell cycle entry. Involved in the regulation of intestinal cell division during postembryonic development, most likely in complex with efl-1 and lin-35. Promotes germ cell programmed cell death, probably together with efl-1, by positively regulating the expression of the apoptosis proteins ced-3 and ced-4. In particular, positively regulates the expression of ced-4 in response to starvation. Its role in programmed cell death may be in conjunction with cell cycle regulatory factor efl-1 and the synthetic multivulva class B proteins lin-35, lin-37 and lin-52, and is independent of the ced-1, ced-8 and ced-9 pathways. The sequence is that of Transcription factor dpl-1 from Caenorhabditis elegans.